We begin with the raw amino-acid sequence, 317 residues long: Melanocyte-stimulating hormone receptor (317 aa).

The Extracellular segment spans residues 1 to 37 (MAVQGSQRRLLGSLNSTPTAIPQLGLAANQTGAWCLE). An N-linked (GlcNAc...) asparagine glycan is attached at N29. A helical membrane pass occupies residues 38 to 63 (VSIPDGLFLSLGLVSLVENVLVVATI). The Cytoplasmic portion of the chain corresponds to 64-72 (AKNRNLHSP). Residues 73–93 (MYCFICCLALSDLLVSGGNVL) traverse the membrane as a helical segment. Residues 94–118 (ETAVILLLEAGALAARAAVVQQLDN) lie on the Extracellular side of the membrane. Residues 119–140 (VIDVITCSSMLSSLCFLGAIAV) form a helical membrane-spanning segment. The Cytoplasmic portion of the chain corresponds to 141 to 163 (DRYISIFYALRYHSIVTLPRARR). The chain crosses the membrane as a helical span at residues 164–183 (AIAAIWVASVLFSTLFIAYY). Residues 184–191 (DHAAVLLC) lie on the Extracellular side of the membrane. A helical transmembrane segment spans residues 192–211 (LVVFFLAMLVLMAVLYVHML). Residues 212 to 240 (ARACQHAQGIARLHKRQRPVHQGFGLKGA) lie on the Cytoplasmic side of the membrane. The helical transmembrane segment at 241 to 266 (VTLTILLGIFFLCWGPFFLHLTLIVL) threads the bilayer. Topologically, residues 267-279 (CPQHPTCSCIFKN) are extracellular. A helical transmembrane segment spans residues 280-300 (FNLFLALIICNAIIDPLIYAF). Residues 301-317 (RSQELRRTLKEVLTCSW) lie on the Cytoplasmic side of the membrane. A lipid anchor (S-palmitoyl cysteine) is attached at C315.

Belongs to the G-protein coupled receptor 1 family. As to quaternary structure, interacts with MGRN1, but does not undergo MGRN1-mediated ubiquitination; this interaction competes with GNAS-binding and thus inhibits agonist-induced cAMP production. Interacts with OPN3; the interaction results in a decrease in MC1R-mediated cAMP signaling and ultimately a decrease in melanin production in melanocytes.

Its subcellular location is the cell membrane. Its function is as follows. Receptor for MSH (alpha, beta and gamma) and ACTH. The activity of this receptor is mediated by G proteins which activate adenylate cyclase. Mediates melanogenesis, the production of eumelanin (black/brown) and phaeomelanin (red/yellow), via regulation of cAMP signaling in melanocytes. In Pongo pygmaeus (Bornean orangutan), this protein is Melanocyte-stimulating hormone receptor (MC1R).